Here is a 706-residue protein sequence, read N- to C-terminus: Fatty acid oxidation complex subunit alpha (706 aa).

Residues 1-188 (MDKSFTLNRL…KMGLVDDVVP (188 aa)) are enoyl-CoA hydratase. A 3-hydroxyacyl-CoA dehydrogenase region spans residues 308–706 (KAVNKVMVLG…MAESGSKFYE (399 aa)).

It in the N-terminal section; belongs to the enoyl-CoA hydratase/isomerase family. In the central section; belongs to the 3-hydroxyacyl-CoA dehydrogenase family. As to quaternary structure, heterotetramer of two alpha chains (FadJ) and two beta chains (FadI).

Its subcellular location is the cytoplasm. The enzyme catalyses a (3S)-3-hydroxyacyl-CoA = a (2E)-enoyl-CoA + H2O. It carries out the reaction a 4-saturated-(3S)-3-hydroxyacyl-CoA = a (3E)-enoyl-CoA + H2O. The catalysed reaction is a (3S)-3-hydroxyacyl-CoA + NAD(+) = a 3-oxoacyl-CoA + NADH + H(+). It catalyses the reaction (3S)-3-hydroxybutanoyl-CoA = (3R)-3-hydroxybutanoyl-CoA. It functions in the pathway lipid metabolism; fatty acid beta-oxidation. Its function is as follows. Catalyzes the formation of a hydroxyacyl-CoA by addition of water on enoyl-CoA. Also exhibits 3-hydroxyacyl-CoA epimerase and 3-hydroxyacyl-CoA dehydrogenase activities. This Shewanella loihica (strain ATCC BAA-1088 / PV-4) protein is Fatty acid oxidation complex subunit alpha.